The sequence spans 594 residues: Acyl-coenzyme A thioesterase 11 (594 aa).

Residues Met1 to Arg20 constitute a mitochondrion transit peptide. Ser15 and Ser25 each carry phosphoserine. The interval Arg20 to Tyr43 is disordered. One can recognise a HotDog ACOT-type 1 domain in the interval Asn45 to Leu157. CoA is bound by residues Thr93–Ser95, Asn122–Ser124, Arg183, and His272–Arg274. Positions Glu217–Asp330 constitute a HotDog ACOT-type 2 domain. The region spanning Lys370–Asp582 is the START domain.

Its subcellular location is the mitochondrion matrix. The protein localises to the cytoplasm. It carries out the reaction hexadecanoyl-CoA + H2O = hexadecanoate + CoA + H(+). The enzyme catalyses tetradecanoyl-CoA + H2O = tetradecanoate + CoA + H(+). The catalysed reaction is dodecanoyl-CoA + H2O = dodecanoate + CoA + H(+). It catalyses the reaction butanoyl-CoA + H2O = butanoate + CoA + H(+). Its pathway is lipid metabolism; fatty acid metabolism. Functionally, has an acyl-CoA thioesterase activity with a preference for the long chain fatty acyl-CoA thioesters hexadecanoyl-CoA/palmitoyl-CoA and tetradecanoyl-CoA/myristoyl-CoA which are the main substrates in the mitochondrial beta-oxidation pathway. The protein is Acyl-coenzyme A thioesterase 11 (Acot11) of Mus musculus (Mouse).